Here is a 294-residue protein sequence, read N- to C-terminus: Ribosomal RNA small subunit methyltransferase A (294 aa).

The S-adenosyl-L-methionine site is built by Asn31, Leu33, Gly58, Glu79, Asp111, and Asn136.

It belongs to the class I-like SAM-binding methyltransferase superfamily. rRNA adenine N(6)-methyltransferase family. RsmA subfamily.

It localises to the cytoplasm. The enzyme catalyses adenosine(1518)/adenosine(1519) in 16S rRNA + 4 S-adenosyl-L-methionine = N(6)-dimethyladenosine(1518)/N(6)-dimethyladenosine(1519) in 16S rRNA + 4 S-adenosyl-L-homocysteine + 4 H(+). Specifically dimethylates two adjacent adenosines (A1518 and A1519) in the loop of a conserved hairpin near the 3'-end of 16S rRNA in the 30S particle. May play a critical role in biogenesis of 30S subunits. This Lactobacillus helveticus (strain DPC 4571) protein is Ribosomal RNA small subunit methyltransferase A.